Here is a 183-residue protein sequence, read N- to C-terminus: Apo-citrate lyase phosphoribosyl-dephospho-CoA transferase (183 aa).

It belongs to the CitX family.

The catalysed reaction is apo-[citrate lyase ACP] + 2'-(5''-triphospho-alpha-D-ribosyl)-3'-dephospho-CoA = holo-[citrate lyase ACP] + diphosphate. In terms of biological role, transfers 2-(5''-triphosphoribosyl)-3'-dephosphocoenzyme-A on a serine residue to the apo-acyl carrier protein (gamma chain) of the citrate lyase to yield holo-acyl carrier protein. This is Apo-citrate lyase phosphoribosyl-dephospho-CoA transferase from Escherichia coli O45:K1 (strain S88 / ExPEC).